The chain runs to 905 residues: FIGNL1-interacting regulator of recombination and mitosis (905 aa).

Residues Ser-101 and Ser-796 each carry the phosphoserine modification. At Lys-845 the chain carries N6-acetyllysine.

In terms of assembly, interacts (via its N-terminal region) with PLK1; controls PLK1 kinase activity. Interacts (via the KVVXF motif) with PPP1CC; controls PLK1 kinase activity. Interacts with FIGNL1; may regulate homologous recombination. Post-translationally, phosphorylation at Ser-101 by PLK1 strengthens FIRRM-PLK1 interaction. Phosphorylation at Ser-796 by PLK1 negatively regulates its interaction with PPP1CC.

It is found in the chromosome. Its subcellular location is the centromere. It localises to the kinetochore. The protein resides in the nucleus. The protein localises to the midbody. It is found in the cytoplasm. Its subcellular location is the cytoskeleton. It localises to the spindle. Its function is as follows. Regulates PLK1 kinase activity at kinetochores and promotes faithful chromosome segregation in prometaphase by bridging kinase and phosphatase activities. Phosphorylation of FIRRM by PLK1 negatively regulates its interaction with the phosphatase, PPP1CC, thus creating a negative feedback loop for maintaining proper PLK1 kinase activity during mitosis. In complex with FIGL1 may regulate homologous recombination. This is FIGNL1-interacting regulator of recombination and mitosis from Rattus norvegicus (Rat).